Here is a 1107-residue protein sequence, read N- to C-terminus: Polyphosphatidylinositol phosphatase INP53 (1107 aa).

An SAC domain is found at 142 to 482; it reads LKKLLSNGSF…GDQISQIYTG (341 aa). At Ser-497 the chain carries Phosphoserine. The disordered stretch occupies residues 926–1107; it reads TASSVASSSP…LDSWQPLTPK (182 aa). The span at 927-942 shows a compositional bias: low complexity; the sequence is ASSVASSSPVSSASAS. The segment covering 943 to 956 has biased composition (polar residues); sequence LQPVRTQNSSQSRT. Ser-986 carries the phosphoserine modification. 4 stretches are compositionally biased toward polar residues: residues 987 to 1005, 1020 to 1038, 1045 to 1063, and 1097 to 1107; these read PTPQ…NIQE, FSQN…SPMS, NSAS…QTPT, and TLDSWQPLTPK. Ser-1035 is modified (phosphoserine). Position 1105 is a phosphothreonine (Thr-1105).

It belongs to the synaptojanin family. The protein in the central section; belongs to the inositol 1,4,5-trisphosphate 5-phosphatase family. Interacts (via SAC domain) with BSP1; the interaction is direct. Interacts with CHC1.

Its subcellular location is the cytoplasm. The enzyme catalyses a 1,2-diacyl-sn-glycero-3-phospho-(1D-myo-inositol-4,5-bisphosphate) + H2O = a 1,2-diacyl-sn-glycero-3-phospho-(1D-myo-inositol 4-phosphate) + phosphate. Its function is as follows. Dephosphorylates a number of phosphatidylinositols (PIs) like phosphatidylinositol 4,5-bisphosphate (PtdIns(4,5)P2), but also phosphatidylinositol 3-phosphate (PtdIns(3)P), phosphatidylinositol 4-phosphate (PtdIns(4)P), and phosphatidylinositol 3,5-bisphosphate (PtdIns(3,5)P2). Controls the cellular levels and subcellular distribution of phosphatidylinositol 3-phosphate and phosphatidylinositol 4,5-bisphosphate. Plays an essential role in a TGN (trans Golgi network)-to-early endosome pathway. Involved in clathrin-mediated protein sorting at the TGN. This chain is Polyphosphatidylinositol phosphatase INP53 (INP53), found in Saccharomyces cerevisiae (strain ATCC 204508 / S288c) (Baker's yeast).